The primary structure comprises 240 residues: Homeobox-leucine zipper protein HOX14 (240 aa).

The interval 26 to 64 is disordered; the sequence is SGEVQGERPRARRRRRRGARCVGGGGGGGEVDGGDPKKR. Over residues 35–44 the composition is skewed to basic residues; that stretch reads RARRRRRRGA. Residues 46 to 56 are compositionally biased toward gly residues; sequence CVGGGGGGGEV. Residues 59-118 constitute a DNA-binding region (homeobox); it reads GDPKKRRLSDEQVEMLELSFREERKLETGRKVHLASELGLDPKQVAVWFQNRRARHKSKL. Residues 108-167 are a coiled coil; it reads QNRRARHKSKLLEEEFSKLKHAHDAAILHKCHLENEVLRLKERLVVAEEEVRRLRSAAGS.

This sequence belongs to the HD-ZIP homeobox family. Class I subfamily. In terms of tissue distribution, expressed in roots, stems, leaf blades and panicles.

The protein resides in the nucleus. In terms of biological role, probable transcription factor. The protein is Homeobox-leucine zipper protein HOX14 (HOX14) of Oryza sativa subsp. japonica (Rice).